A 270-amino-acid chain; its full sequence is tRNA pseudouridine synthase A (270 aa).

Asp-60 acts as the Nucleophile in catalysis. Tyr-118 contributes to the substrate binding site.

This sequence belongs to the tRNA pseudouridine synthase TruA family. As to quaternary structure, homodimer.

It catalyses the reaction uridine(38/39/40) in tRNA = pseudouridine(38/39/40) in tRNA. Formation of pseudouridine at positions 38, 39 and 40 in the anticodon stem and loop of transfer RNAs. The sequence is that of tRNA pseudouridine synthase A from Cronobacter sakazakii (strain ATCC BAA-894) (Enterobacter sakazakii).